A 187-amino-acid polypeptide reads, in one-letter code: Large ribosomal subunit protein uL5 (187 aa).

Belongs to the universal ribosomal protein uL5 family. As to quaternary structure, part of the 50S ribosomal subunit; part of the 5S rRNA/L5/L18/L25 subcomplex. Contacts the 5S rRNA and the P site tRNA. Forms a bridge to the 30S subunit in the 70S ribosome.

This is one of the proteins that bind and probably mediate the attachment of the 5S RNA into the large ribosomal subunit, where it forms part of the central protuberance. In the 70S ribosome it contacts protein S13 of the 30S subunit (bridge B1b), connecting the 2 subunits; this bridge is implicated in subunit movement. Contacts the P site tRNA; the 5S rRNA and some of its associated proteins might help stabilize positioning of ribosome-bound tRNAs. This Roseobacter denitrificans (strain ATCC 33942 / OCh 114) (Erythrobacter sp. (strain OCh 114)) protein is Large ribosomal subunit protein uL5.